A 227-amino-acid polypeptide reads, in one-letter code: GTP:AMP phosphotransferase AK3, mitochondrial (227 aa).

GTP is bound by residues Gly-17, Gly-19, Lys-20, Gly-21, and Thr-22. At Lys-20 the chain carries N6-succinyllysine. An N6-acetyllysine modification is found at Lys-34. The residue at position 37 (Ser-37) is a Phosphoserine. Residues 37 to 66 (SSGDLLRDNMLRGTEIGVLAKAFIDQGKLI) form an NMP region. AMP-binding residues include Ser-38 and Arg-43. An N6-succinyllysine modification is found at Lys-57. Lys-64 contributes to the AMP binding site. N6-acetyllysine; alternate is present on residues Lys-64 and Lys-80. Residues Lys-64 and Lys-80 each carry the N6-succinyllysine; alternate modification. 3 residues coordinate AMP: Gly-91, Arg-94, and Gln-98. The LID stretch occupies residues 127 to 164 (ARWIHPASGRVYNIEFNPPKTVGIDDLTGEPLIQREDD). Residues Arg-128, Tyr-138, Asn-139, Arg-161, and Arg-172 each contribute to the GTP site. An N6-acetyllysine; alternate mark is found at Lys-174 and Lys-189. N6-succinyllysine; alternate occurs at positions 174 and 189. Thr-201 contacts GTP. Lys-203 is subject to N6-acetyllysine.

The protein belongs to the adenylate kinase family. AK3 subfamily. In terms of assembly, monomer.

It is found in the mitochondrion matrix. The enzyme catalyses a ribonucleoside 5'-triphosphate + AMP = a ribonucleoside 5'-diphosphate + ADP. The catalysed reaction is GTP + AMP = GDP + ADP. It catalyses the reaction ITP + AMP = IDP + ADP. Mitochondrial adenylate kinase with a specific GTP:AMP phosphotransferase activity. Could also use ITP as phosphate donor. Its physiological function is to recycle GTP into GDP which is necessary for the TCA cycle in the mitochondrial matrix. The protein is GTP:AMP phosphotransferase AK3, mitochondrial of Pongo abelii (Sumatran orangutan).